A 400-amino-acid chain; its full sequence is Argininosuccinate synthase (400 aa).

ATP-binding positions include 10–18 (AYSGGVDTS) and Ala38. Tyr89 serves as a coordination point for L-citrulline. Gly119 contributes to the ATP binding site. Positions 121, 125, and 126 each coordinate L-aspartate. L-citrulline is bound at residue Asn125. Arg129, Ser177, Ser186, Glu262, and Tyr274 together coordinate L-citrulline.

The protein belongs to the argininosuccinate synthase family. Type 1 subfamily. In terms of assembly, homotetramer.

It localises to the cytoplasm. The catalysed reaction is L-citrulline + L-aspartate + ATP = 2-(N(omega)-L-arginino)succinate + AMP + diphosphate + H(+). It participates in amino-acid biosynthesis; L-arginine biosynthesis; L-arginine from L-ornithine and carbamoyl phosphate: step 2/3. The chain is Argininosuccinate synthase from Crocosphaera subtropica (strain ATCC 51142 / BH68) (Cyanothece sp. (strain ATCC 51142)).